The following is a 353-amino-acid chain: Rhodopsin (353 aa).

The Extracellular segment spans residues 1 to 36 (MNGTEGPYFYIPMVNTTGIVRSPYEYPQYYLVNPAA). Residues N2 and N15 are each glycosylated (N-linked (GlcNAc...) asparagine). The chain crosses the membrane as a helical span at residues 37-61 (YAALGAYMFLLILVGFPINFLTLYV). The Cytoplasmic segment spans residues 62–73 (TIEHKKLRTPLN). A helical transmembrane segment spans residues 74–96 (YILLNLAVANLFMVFGGFTTTMY). Residues 97–110 (TSMHGYFVLGRLGC) are Extracellular-facing. The cysteines at positions 110 and 187 are disulfide-linked. Residues 111 to 133 (NLEGFFATLGGEIALWSLVVLAI) form a helical membrane-spanning segment. The 'Ionic lock' involved in activated form stabilization signature appears at 134-136 (ERW). At 134–152 (ERWMVVCKPISNFRFGEDH) the chain is on the cytoplasmic side. Residues 153–173 (AIMGLAFTWVMAAACAVPPLV) form a helical membrane-spanning segment. Residues 174–202 (GWSRYIPEGMQCSCGIDYYTRAEGFNNES) are Extracellular-facing. Residue N200 is glycosylated (N-linked (GlcNAc...) asparagine). Residues 203–224 (FVIYMFVCHFLIPLVVVFFCYG) form a helical membrane-spanning segment. Over 225 to 252 (RLLCAVKEAAAAQQESETTQRAEREVSR) the chain is Cytoplasmic. The chain crosses the membrane as a helical span at residues 253-274 (MVVIMVVAFLICWCPYAGVAWY). Residues 275–286 (IFTHQGSEFGPL) lie on the Extracellular side of the membrane. The helical transmembrane segment at 287-308 (FMTFPAFFAKSSSIYNPMIYIC) threads the bilayer. Position 296 is an N6-(retinylidene)lysine (K296). The Cytoplasmic portion of the chain corresponds to 309-353 (MNKQFRHCMITTLCCGKNPFEEEEGASTTSKTEASSVSSSSVSPA). Residues C322 and C323 are each lipidated (S-palmitoyl cysteine). Positions 330–353 (EEEGASTTSKTEASSVSSSSVSPA) are disordered. Residues 334–353 (ASTTSKTEASSVSSSSVSPA) are compositionally biased toward low complexity.

It belongs to the G-protein coupled receptor 1 family. Opsin subfamily. Post-translationally, phosphorylated on some or all of the serine and threonine residues present in the C-terminal region. Contains one covalently linked retinal chromophore.

It localises to the membrane. The protein localises to the cell projection. Its subcellular location is the cilium. The protein resides in the photoreceptor outer segment. In terms of biological role, photoreceptor required for image-forming vision at low light intensity. While most salt water fish species use retinal as chromophore, most freshwater fish use 3-dehydroretinal, or a mixture of retinal and 3-dehydroretinal. Light-induced isomerization of 11-cis to all-trans retinal triggers a conformational change that activates signaling via G-proteins. Subsequent receptor phosphorylation mediates displacement of the bound G-protein alpha subunit by arrestin and terminates signaling. This is Rhodopsin (rho) from Chelon saliens (Leaping mullet).